A 329-amino-acid chain; its full sequence is MSAEASGPAAAEAPSLEVAKPSELEPGSAAYGLKPLTTNSKYVKLNVGGSLHYTTLRTLTGQDTRLKAMFSGRAEVLTDAGGWVLIDRSGRHFGTILNYLRDGSVPLPESTRELGELLGEARHYLVQGLIEDCQLALQQKRENVSPLCLIPTVTSPREEQQLLASTSKPVVKLLHNRSNNKYSYTSTSDDNLLKNIELFDKLALRFHGRLLFLKDVLGDEICCWSFYGQGRKIAEVCCTSIVYATEKKQTKVEFPEARIFEETLNILIYETPRGPDPALLEATGGAAGGGGASRGEDEDNREHRVRRIHVRRHITHDERPHGQQIVFKD.

Residues M1–S15 are compositionally biased toward low complexity. A disordered region spans residues M1–P21. The BTB domain maps to K41–E109. Positions L280 to E302 are disordered.

The protein belongs to the BACURD family. As to quaternary structure, homotetramer; forms a two-fold symmetric tetramer in solution. Interacts with CUL3; interaction is direct and forms a 5:5 heterodecamer. Component of the BCR(KCTD13) E3 ubiquitin ligase complex, at least composed of CUL3, KCTD13/BACURD1 and RBX1. Interacts with RHOA; with a preference for RhoA-GDP. Interacts with POLD2 and PCNA. Interacts with SPRTN.

It is found in the nucleus. It functions in the pathway protein modification; protein ubiquitination. Its function is as follows. Substrate-specific adapter of a BCR (BTB-CUL3-RBX1) E3 ubiquitin-protein ligase complex required for synaptic transmission. The BCR(KCTD13) E3 ubiquitin ligase complex mediates the ubiquitination of RHOA, leading to its degradation by the proteasome, thereby regulating the actin cytoskeleton and promoting synaptic transmission. The polypeptide is BTB/POZ domain-containing adapter for CUL3-mediated RhoA degradation protein 1 (KCTD13) (Bos taurus (Bovine)).